The chain runs to 123 residues: Holo-[acyl-carrier-protein] synthase (123 aa).

Residues Asp9 and Glu57 each contribute to the Mg(2+) site.

The protein belongs to the P-Pant transferase superfamily. AcpS family. Requires Mg(2+) as cofactor.

It is found in the cytoplasm. It carries out the reaction apo-[ACP] + CoA = holo-[ACP] + adenosine 3',5'-bisphosphate + H(+). Its function is as follows. Transfers the 4'-phosphopantetheine moiety from coenzyme A to a Ser of acyl-carrier-protein. This Streptomyces avermitilis (strain ATCC 31267 / DSM 46492 / JCM 5070 / NBRC 14893 / NCIMB 12804 / NRRL 8165 / MA-4680) protein is Holo-[acyl-carrier-protein] synthase.